Reading from the N-terminus, the 227-residue chain is Cytochrome c oxidase subunit 2 (227 aa).

The Mitochondrial intermembrane segment spans residues 1–14 (MAYPFQLGLQDATS). Residues 15-45 (PIMEELLHFHDHTLMIVFLISSLILYIISLM) traverse the membrane as a helical segment. The Mitochondrial matrix portion of the chain corresponds to 46–59 (LTTKLTHTSTMDAQ). The chain crosses the membrane as a helical span at residues 60–87 (EVETVWTILPAIILILIALPSLRILYMM). Residues 88-227 (DEINNPSLTV…YFETWSALMV (140 aa)) lie on the Mitochondrial intermembrane side of the membrane. Residues histidine 161, cysteine 196, glutamate 198, cysteine 200, histidine 204, and methionine 207 each coordinate Cu cation. Residue glutamate 198 coordinates Mg(2+). Residue tyrosine 218 is modified to Phosphotyrosine.

The protein belongs to the cytochrome c oxidase subunit 2 family. In terms of assembly, component of the cytochrome c oxidase (complex IV, CIV), a multisubunit enzyme composed of 14 subunits. The complex is composed of a catalytic core of 3 subunits MT-CO1, MT-CO2 and MT-CO3, encoded in the mitochondrial DNA, and 11 supernumerary subunits COX4I, COX5A, COX5B, COX6A, COX6B, COX6C, COX7A, COX7B, COX7C, COX8 and NDUFA4, which are encoded in the nuclear genome. The complex exists as a monomer or a dimer and forms supercomplexes (SCs) in the inner mitochondrial membrane with NADH-ubiquinone oxidoreductase (complex I, CI) and ubiquinol-cytochrome c oxidoreductase (cytochrome b-c1 complex, complex III, CIII), resulting in different assemblies (supercomplex SCI(1)III(2)IV(1) and megacomplex MCI(2)III(2)IV(2)). Found in a complex with TMEM177, COA6, COX18, COX20, SCO1 and SCO2. Interacts with TMEM177 in a COX20-dependent manner. Interacts with COX20. Interacts with COX16. The cofactor is Cu cation.

The protein localises to the mitochondrion inner membrane. The catalysed reaction is 4 Fe(II)-[cytochrome c] + O2 + 8 H(+)(in) = 4 Fe(III)-[cytochrome c] + 2 H2O + 4 H(+)(out). In terms of biological role, component of the cytochrome c oxidase, the last enzyme in the mitochondrial electron transport chain which drives oxidative phosphorylation. The respiratory chain contains 3 multisubunit complexes succinate dehydrogenase (complex II, CII), ubiquinol-cytochrome c oxidoreductase (cytochrome b-c1 complex, complex III, CIII) and cytochrome c oxidase (complex IV, CIV), that cooperate to transfer electrons derived from NADH and succinate to molecular oxygen, creating an electrochemical gradient over the inner membrane that drives transmembrane transport and the ATP synthase. Cytochrome c oxidase is the component of the respiratory chain that catalyzes the reduction of oxygen to water. Electrons originating from reduced cytochrome c in the intermembrane space (IMS) are transferred via the dinuclear copper A center (CU(A)) of subunit 2 and heme A of subunit 1 to the active site in subunit 1, a binuclear center (BNC) formed by heme A3 and copper B (CU(B)). The BNC reduces molecular oxygen to 2 water molecules using 4 electrons from cytochrome c in the IMS and 4 protons from the mitochondrial matrix. The protein is Cytochrome c oxidase subunit 2 (MT-CO2) of Canis simensis (Ethiopian wolf).